We begin with the raw amino-acid sequence, 144 residues long: Large ribosomal subunit protein uL15 (144 aa).

Residues 1-58 are disordered; sequence MQLNDLRSAPGARREKLRPGRGIGSGLGKTGGRGHKGQTSRSGGKIAPGFEGGQQPLH. Residues 21–31 are compositionally biased toward gly residues; the sequence is RGIGSGLGKTG.

This sequence belongs to the universal ribosomal protein uL15 family. As to quaternary structure, part of the 50S ribosomal subunit.

Its function is as follows. Binds to the 23S rRNA. The protein is Large ribosomal subunit protein uL15 of Azotobacter vinelandii (strain DJ / ATCC BAA-1303).